The primary structure comprises 162 residues: Ribosomal RNA large subunit methyltransferase H (162 aa).

Residues L78, G109, and 128 to 133 each bind S-adenosyl-L-methionine; that span reads LSALTL.

Belongs to the RNA methyltransferase RlmH family. As to quaternary structure, homodimer.

Its subcellular location is the cytoplasm. The enzyme catalyses pseudouridine(1915) in 23S rRNA + S-adenosyl-L-methionine = N(3)-methylpseudouridine(1915) in 23S rRNA + S-adenosyl-L-homocysteine + H(+). Its function is as follows. Specifically methylates the pseudouridine at position 1915 (m3Psi1915) in 23S rRNA. This chain is Ribosomal RNA large subunit methyltransferase H, found in Psychrobacter arcticus (strain DSM 17307 / VKM B-2377 / 273-4).